The following is a 299-amino-acid chain: Oxygen-dependent coproporphyrinogen-III oxidase (299 aa).

Ser-92 contributes to the substrate binding site. Mn(2+) is bound by residues His-96 and His-106. His-106 (proton donor) is an active-site residue. Substrate is bound at residue 108–110; that stretch reads NVR. His-145 and His-175 together coordinate Mn(2+). Positions 240 to 275 are important for dimerization; that stretch reads YVEFNLVWDRGTLFGLQTGGRTESILMSMPPLVRWE. 258–260 is a substrate binding site; that stretch reads GGR.

The protein belongs to the aerobic coproporphyrinogen-III oxidase family. Homodimer. Mn(2+) is required as a cofactor.

The protein resides in the cytoplasm. It carries out the reaction coproporphyrinogen III + O2 + 2 H(+) = protoporphyrinogen IX + 2 CO2 + 2 H2O. It functions in the pathway porphyrin-containing compound metabolism; protoporphyrin-IX biosynthesis; protoporphyrinogen-IX from coproporphyrinogen-III (O2 route): step 1/1. Involved in the heme biosynthesis. Catalyzes the aerobic oxidative decarboxylation of propionate groups of rings A and B of coproporphyrinogen-III to yield the vinyl groups in protoporphyrinogen-IX. The polypeptide is Oxygen-dependent coproporphyrinogen-III oxidase (Escherichia coli O7:K1 (strain IAI39 / ExPEC)).